Reading from the N-terminus, the 316-residue chain is Pantothenate kinase (316 aa).

95 to 102 (GSVAVGKS) contacts ATP.

It belongs to the prokaryotic pantothenate kinase family.

Its subcellular location is the cytoplasm. The enzyme catalyses (R)-pantothenate + ATP = (R)-4'-phosphopantothenate + ADP + H(+). It functions in the pathway cofactor biosynthesis; coenzyme A biosynthesis; CoA from (R)-pantothenate: step 1/5. This Shewanella woodyi (strain ATCC 51908 / MS32) protein is Pantothenate kinase.